The chain runs to 295 residues: Light-independent protochlorophyllide reductase iron-sulfur ATP-binding protein (295 aa).

Residues 39–44 (GIGKST) and Lys68 each bind ATP. Ser43 contributes to the Mg(2+) binding site. [4Fe-4S] cluster is bound by residues Cys124 and Cys158. 209-210 (NR) is an ATP binding site.

This sequence belongs to the NifH/BchL/ChlL family. Homodimer. Protochlorophyllide reductase is composed of three subunits; ChlL, ChlN and ChlB. It depends on [4Fe-4S] cluster as a cofactor.

The enzyme catalyses chlorophyllide a + oxidized 2[4Fe-4S]-[ferredoxin] + 2 ADP + 2 phosphate = protochlorophyllide a + reduced 2[4Fe-4S]-[ferredoxin] + 2 ATP + 2 H2O. The protein operates within porphyrin-containing compound metabolism; chlorophyll biosynthesis (light-independent). In terms of biological role, component of the dark-operative protochlorophyllide reductase (DPOR) that uses Mg-ATP and reduced ferredoxin to reduce ring D of protochlorophyllide (Pchlide) to form chlorophyllide a (Chlide). This reaction is light-independent. The L component serves as a unique electron donor to the NB-component of the complex, and binds Mg-ATP. In Prochlorococcus marinus (strain MIT 9301), this protein is Light-independent protochlorophyllide reductase iron-sulfur ATP-binding protein.